The following is a 289-amino-acid chain: Acetyl-coenzyme A carboxylase carboxyl transferase subunit beta (289 aa).

The CoA carboxyltransferase N-terminal domain occupies 34 to 289; that stretch reads MWVKCNKCGE…KLINMHQNSF (256 aa). 4 residues coordinate Zn(2+): Cys-38, Cys-41, Cys-57, and Cys-60. The C4-type zinc-finger motif lies at 38-60; it reads CNKCGEILYQNDLEKNYMVCNLC.

The protein belongs to the AccD/PCCB family. In terms of assembly, acetyl-CoA carboxylase is a heterohexamer composed of biotin carboxyl carrier protein (AccB), biotin carboxylase (AccC) and two subunits each of ACCase subunit alpha (AccA) and ACCase subunit beta (AccD). Zn(2+) is required as a cofactor.

The protein localises to the cytoplasm. The enzyme catalyses N(6)-carboxybiotinyl-L-lysyl-[protein] + acetyl-CoA = N(6)-biotinyl-L-lysyl-[protein] + malonyl-CoA. It functions in the pathway lipid metabolism; malonyl-CoA biosynthesis; malonyl-CoA from acetyl-CoA: step 1/1. Its function is as follows. Component of the acetyl coenzyme A carboxylase (ACC) complex. Biotin carboxylase (BC) catalyzes the carboxylation of biotin on its carrier protein (BCCP) and then the CO(2) group is transferred by the transcarboxylase to acetyl-CoA to form malonyl-CoA. The chain is Acetyl-coenzyme A carboxylase carboxyl transferase subunit beta from Clostridium botulinum (strain ATCC 19397 / Type A).